The chain runs to 392 residues: MATPVDTEYYDLLGISTDATAVDIKKAYRKLAVKYHPDKNPDDPQGASEKFQKISEAYQVLGDEKLRSQYDQFGKEKAVPEQGFTDAYDFFTNLFGGAPFREWVGELSFVKEMFREEDSAVEQGQMNDKQQLLLESSEPTPTIKQQFNDRKKNAQIREREALAKREQEMIEDRRQRIKEVTENLEKRLDDWIAKATTEEGLNALREKYTQEANTLRIESFGVEILHAIGEVYTQKGRTVLKSSKFGIGGFWSRMKEKGKIARATWDTVSAAMDAKLSIDQMQKLEDKGEDQASAEERAKLELDITGKILRASWCGARYDIQGVLREACSNLLKKRVPTELRLKRAHALLEIGTIFSNVEADPDDPNRIFENLILENKKKRKKGSEAKPPKAT.

Residues 7–76 (TEYYDLLGIS…RSQYDQFGKE (70 aa)) form the J domain. Ser-108 bears the Phosphoserine mark.

This is an uncharacterized protein from Schizosaccharomyces pombe (strain 972 / ATCC 24843) (Fission yeast).